The chain runs to 470 residues: Argininosuccinate lyase (470 aa).

This sequence belongs to the lyase 1 family. Argininosuccinate lyase subfamily.

The protein resides in the cytoplasm. It carries out the reaction 2-(N(omega)-L-arginino)succinate = fumarate + L-arginine. Its pathway is amino-acid biosynthesis; L-arginine biosynthesis; L-arginine from L-ornithine and carbamoyl phosphate: step 3/3. This chain is Argininosuccinate lyase, found in Synechococcus sp. (strain WH7803).